The sequence spans 305 residues: Acetylglutamate kinase (305 aa).

Substrate contacts are provided by residues 78 to 79 (GG), arginine 100, and asparagine 202.

Belongs to the acetylglutamate kinase family. ArgB subfamily.

Its subcellular location is the cytoplasm. The enzyme catalyses N-acetyl-L-glutamate + ATP = N-acetyl-L-glutamyl 5-phosphate + ADP. It participates in amino-acid biosynthesis; L-arginine biosynthesis; N(2)-acetyl-L-ornithine from L-glutamate: step 2/4. Functionally, catalyzes the ATP-dependent phosphorylation of N-acetyl-L-glutamate. The protein is Acetylglutamate kinase of Polaromonas sp. (strain JS666 / ATCC BAA-500).